Reading from the N-terminus, the 757-residue chain is LPS-assembly protein LptD (757 aa).

The signal sequence occupies residues 1 to 21 (MRRLIPIAITGSLLWGAAVQA).

This sequence belongs to the LptD family. In terms of assembly, component of the lipopolysaccharide transport and assembly complex. Interacts with LptE and LptA.

It is found in the cell outer membrane. Together with LptE, is involved in the assembly of lipopolysaccharide (LPS) at the surface of the outer membrane. The protein is LPS-assembly protein LptD of Alkalilimnicola ehrlichii (strain ATCC BAA-1101 / DSM 17681 / MLHE-1).